The following is a 362-amino-acid chain: Somatostatin receptor type 5 (362 aa).

Polar residues predominate over residues 1–10 (MEPLSLTSTP). A disordered region spans residues 1 to 24 (MEPLSLTSTPSWNASAASSSSHNW). The Extracellular segment spans residues 1–35 (MEPLSLTSTPSWNASAASSSSHNWSLVDPVSPMGA). The span at 11–24 (SWNASAASSSSHNW) shows a compositional bias: low complexity. 2 N-linked (GlcNAc...) asparagine glycosylation sites follow: asparagine 13 and asparagine 23. A helical transmembrane segment spans residues 36–63 (RAVLVPVLYLLVCTVGLGGNTLVIYVVL). Residues 64–73 (RYAKMKTVTN) lie on the Cytoplasmic side of the membrane. The chain crosses the membrane as a helical span at residues 74–99 (VYILNLAVADVLFMLGLPFLATQNAV). Topologically, residues 100 to 110 (SYWPFGSFLCR) are extracellular. The cysteines at positions 109 and 184 are disulfide-linked. Residues 111 to 132 (LVMTLDGINQFTSIFCLMVMSV) form a helical membrane-spanning segment. Residues 133 to 154 (DRYLAVVHPLRSARWRRPRVAK) lie on the Cytoplasmic side of the membrane. A helical membrane pass occupies residues 155 to 175 (LASAAVWVFSLLMSLPLLVFA). Over 176–195 (DVQEGWGTCNLSWPEPVGLW) the chain is Extracellular. Asparagine 185 carries an N-linked (GlcNAc...) asparagine glycan. Residues 196-220 (GAAFITYTSVLGFFGPLLVICLCYL) form a helical membrane-spanning segment. Residues 221–246 (LIVVKVKAAGMRVGSSRRRRSERKVT) are Cytoplasmic-facing. Residues 247–272 (RMVVVVVLVFVGCWLPFFIVNIVNLA) traverse the membrane as a helical segment. Topologically, residues 273 to 282 (FTLPEEPTSA) are extracellular. Residues 283-307 (GLYFFVVVLSYANSCANPLLYGFLS) form a helical membrane-spanning segment. Over 308-362 (DNFRQSFRKALCLRRGYGVEDADAIEPRPDKSGRPQTTLPTRSCEANGLMQTSRL) the chain is Cytoplasmic. Cysteine 319 carries S-palmitoyl cysteine; by ZDHHC5 lipidation. Residues 330 to 362 (DAIEPRPDKSGRPQTTLPTRSCEANGLMQTSRL) are disordered.

Belongs to the G-protein coupled receptor 1 family. As to quaternary structure, heterodimer with SSTR2. Heterodimerization with SSTR2 increases cell growth inhibition activity of SSTR2. Palmitoylated at Cys-319 by ZDHHC5, but not ZDHHC8. Palmitoylation creates an additional intracellular loop which is thought to be important for efficient coupling to G-proteins and may target the protein to lipid rafts. As to expression, expressed in adult brain but not in liver, heart, spleen, or kidney.

It localises to the cell membrane. Its function is as follows. Receptor for somatostatin-28. The activity of this receptor is mediated by G proteins which inhibit adenylyl cyclase. Increases cell growth inhibition activity of SSTR2 following heterodimerization. The chain is Somatostatin receptor type 5 (Sstr5) from Mus musculus (Mouse).